Consider the following 319-residue polypeptide: RNA polymerase II holoenzyme cyclin-like subunit (319 aa).

The region spanning 53–142 is the Cyclin N-terminal domain; it reads QQLIRLAKRL…LGECEFFMIS (90 aa). Positions 237-251 are enriched in low complexity; that stretch reads QGQQAQGGMPEPAAA. Residues 237–261 form a disordered region; that stretch reads QGQQAQGGMPEPAAAEPKEKRQQDR. Positions 252 to 261 are enriched in basic and acidic residues; it reads EPKEKRQQDR.

The protein belongs to the cyclin family. Cyclin C subfamily. In terms of assembly, component of the SRB8-11 complex, a regulatory module of the Mediator complex. Interacts with SSN3/FCK1.

The protein resides in the nucleus. Component of the SRB8-11 complex. The SRB8-11 complex is a regulatory module of the Mediator complex which is itself involved in regulation of basal and activated RNA polymerase II-dependent transcription. The SRB8-11 complex may be involved in the transcriptional repression of a subset of genes regulated by Mediator. It may inhibit the association of the Mediator complex with RNA polymerase II to form the holoenzyme complex. The SRB8-11 complex phosphorylates the C-terminal domain (CTD) of the largest subunit of RNA polymerase II. May play a role in signal transduction pathways regulating secondary metabolism and fungal development (conidiation). This is RNA polymerase II holoenzyme cyclin-like subunit (SSN8) from Gibberella moniliformis (Maize ear and stalk rot fungus).